Reading from the N-terminus, the 343-residue chain is CRISPR-associated endonuclease Cas1 1 (343 aa).

Mn(2+)-binding residues include E166, H234, and E249.

It belongs to the CRISPR-associated endonuclease Cas1 family. Homodimer, forms a heterotetramer with a Cas2 homodimer. It depends on Mg(2+) as a cofactor. The cofactor is Mn(2+).

In terms of biological role, CRISPR (clustered regularly interspaced short palindromic repeat), is an adaptive immune system that provides protection against mobile genetic elements (viruses, transposable elements and conjugative plasmids). CRISPR clusters contain spacers, sequences complementary to antecedent mobile elements, and target invading nucleic acids. CRISPR clusters are transcribed and processed into CRISPR RNA (crRNA). Acts as a dsDNA endonuclease. Involved in the integration of spacer DNA into the CRISPR cassette. This Moorella thermoacetica (strain ATCC 39073 / JCM 9320) protein is CRISPR-associated endonuclease Cas1 1.